Here is a 957-residue protein sequence, read N- to C-terminus: MSFVIAAPEVIAAAATDLASLGSSISAANAAAAANTTALMAAGADEVSTAIAALFGAHGQAYQALSAQAQAFHAQFVQALTSGGGAYAAAEAAAVSPLLDPINEFFLANTGRPLIGNGANGAPGTGANGGDGGWLIGNGGAGGSGAAGVNGGAGGNGGAGGNGGAGGLIGNGGAGGAGGVASSGIGGSGGAGGNAMLFGAGGAGGAGGGVVALTGGAGGAGGAGGNAGLLFGAAGVGGAGGFTNGSALGGAGGAGGAGGLFATGGVGGSGGAGSSGGAGGAGGAGGLFGAGGTGGHGGFADSSFGGVGGAGGAGGLFGAGGEGGSGGHSLVAGGDGGAGGNAGMLALGAAGGAGGIGGDGGTLTAGGIGGAGGAGGNAGLLFGSGGSGGAGGFGFADGGQGGPGGNAGTVFGSGGAGGNGGVGQGFAGGIGGAGGTPGLIGNGGNGGNGGASAVTGGNGGIGGTGVLIGNGGNGGSGGIGAGKAGVGGVSGLLLGLDGFNAPASTSPLHTLQQNVLNVVNEPFQTLTGRPLIGNGANGTPGTGADGGAGGWLFGNGANGTPGTGAAGGAGGWLFGNGGNGGHGATNTAATATGGAGGAGGILFGTGGNGGTGGIATGAGGIGGAGGAGGVSLLIGSGGTGGNGGNSIGVAGIGGAGGRGGDAGLLFGAAGTGGHGAAGGVPAGVGGAGGNGGLFANGGAGGAGGFNAAGGNGGNGGLFGTGGTGGAGTNFGAGGNGGNGGLFGAGGTGGAAGSGGSGITTGGGGHGGNAGLLSLGASGGAGGSGGASSLAGGAGGTGGNGALLFGFRGAGGAGGHGGAALTSIQQGGAGGAGGNGGLLFGSAGAGGAGGSGANALGAGTGGTGGDGGHAGVFGNGGDGGCRRVWRRYRRQRWCRRQRRADRQRRQRRQRRQSRGHARCRRHRRAAARRERTQRLAIAGRPATTRGVEGISCSPQMMP.

Residues 4–94 (VIAAPEVIAA…GAYAAAEAAA (91 aa)) enclose the PE domain. The span at 893-925 (CRRQRRADRQRRQRRQRRQSRGHARCRRHRRAA) shows a compositional bias: basic residues. Residues 893 to 957 (CRRQRRADRQ…GISCSPQMMP (65 aa)) are disordered.

This sequence belongs to the mycobacterial PE family. PGRS subfamily. In terms of processing, a cleavage of the protein removes the N-terminal 120-150 residues, immediately upstream the PGRS domain. The exact position of the cleavage site could not be identified.

It is found in the cell outer membrane. It localises to the secreted. The protein resides in the cell wall. The protein localises to the cell surface. In terms of biological role, the arginine-rich C-terminal region protrudes from the mycobacterial membrane and mediates M.tuberculosis entry into host epithelial cells. May serve as a bridge between mycobacteria and host cells by interacting with specific host phospholipids and extracting them from host cells, for their direct integration or as a source of phosphate, during phases of TB pathogenesis when M.tuberculosis is short of phosphate supply. This is PE-PGRS family protein PE_PGRS3 from Mycobacterium tuberculosis (strain ATCC 25618 / H37Rv).